The following is a 122-amino-acid chain: Large ribosomal subunit protein uL14 (122 aa).

The protein belongs to the universal ribosomal protein uL14 family. As to quaternary structure, part of the 50S ribosomal subunit. Forms a cluster with proteins L3 and L19. In the 70S ribosome, L14 and L19 interact and together make contacts with the 16S rRNA in bridges B5 and B8.

Binds to 23S rRNA. Forms part of two intersubunit bridges in the 70S ribosome. This chain is Large ribosomal subunit protein uL14, found in Brucella anthropi (strain ATCC 49188 / DSM 6882 / CCUG 24695 / JCM 21032 / LMG 3331 / NBRC 15819 / NCTC 12168 / Alc 37) (Ochrobactrum anthropi).